A 112-amino-acid chain; its full sequence is Cytochrome c2 (112 aa).

Heme c is bound by residues C14, C17, H18, and M91.

It belongs to the cytochrome c family. Binds 1 heme c group covalently per subunit.

Cytochrome c2 is found mainly in purple, non-sulfur, photosynthetic bacteria where it functions as the electron donor to the oxidized bacteriochlorophyll in the photophosphorylation pathway. However, it may also have a role in the respiratory chain and is found in some non-photosynthetic bacteria. This chain is Cytochrome c2 (cycA), found in Rhodospirillum rubrum.